Consider the following 388-residue polypeptide: Succinate--CoA ligase [ADP-forming] subunit beta (388 aa).

Positions lysine 9 to histidine 244 constitute an ATP-grasp domain. ATP is bound by residues lysine 46, glycine 53 to glycine 55, glutamate 99, threonine 102, and glutamate 107. Positions 199 and 213 each coordinate Mg(2+). Residues asparagine 264 and glycine 321–valine 323 each bind substrate.

It belongs to the succinate/malate CoA ligase beta subunit family. Heterotetramer of two alpha and two beta subunits. Requires Mg(2+) as cofactor.

It catalyses the reaction succinate + ATP + CoA = succinyl-CoA + ADP + phosphate. It carries out the reaction GTP + succinate + CoA = succinyl-CoA + GDP + phosphate. It participates in carbohydrate metabolism; tricarboxylic acid cycle; succinate from succinyl-CoA (ligase route): step 1/1. Succinyl-CoA synthetase functions in the citric acid cycle (TCA), coupling the hydrolysis of succinyl-CoA to the synthesis of either ATP or GTP and thus represents the only step of substrate-level phosphorylation in the TCA. The beta subunit provides nucleotide specificity of the enzyme and binds the substrate succinate, while the binding sites for coenzyme A and phosphate are found in the alpha subunit. The polypeptide is Succinate--CoA ligase [ADP-forming] subunit beta (Pseudomonas syringae pv. syringae (strain B728a)).